The chain runs to 85 residues: Platelet factor 4 (85 aa).

Cystine bridges form between Cys-25/Cys-51 and Cys-27/Cys-67. Phosphoserine is present on Ser-41. 76-82 (KKIIKRL) provides a ligand contact to heparin.

The protein belongs to the intercrine alpha (chemokine CxC) family. As to quaternary structure, homotetramer. Interacts with TNFAIP6 (via Link domain). Interacts with CCR1. Interacts with CXCR3. Interacts with THBD; this interaction enhances generation of activated protein C.

The protein resides in the secreted. In terms of biological role, chemokine released during platelet aggregation that plays a role in different biological processes including hematopoiesis, cell proliferation, differentiation, and activation. Acts via different functional receptors including CCR1, CXCR3A or CXCR3B. Upon interaction with CXCR3A receptor, induces activated T-lymphocytes migration mediated via downstream Ras/extracellular signal-regulated kinase (ERK) signaling. Neutralizes the anticoagulant effect of heparin by binding more strongly to heparin than to the chondroitin-4-sulfate chains of the carrier molecule. Plays a role in the inhibition of hematopoiesis and in the maintenance of hematopoietic stem cell (HSC) quiescence. Chemotactic for neutrophils and monocytes via CCR1. Inhibits endothelial cell proliferation. In cooperation with toll-like receptor 8/TLR8, induces chromatin remodeling and activates inflammatory gene expression via the TBK1-IRF5 axis. In addition, induces myofibroblast differentiation and collagen synthesis in different precursor cells, including endothelial cells, by stimulating endothelial-to-mesenchymal transition. Interacts with thrombomodulin/THBD to enhance the activation of protein C and thus potentiates its anticoagulant activity. The chain is Platelet factor 4 (PF4) from Ovis aries (Sheep).